The sequence spans 350 residues: Vancomycin C-type resistance protein VanC2 (350 aa).

Catalysis depends on residues E14 and S187. One can recognise an ATP-grasp domain in the interval 141–343 (HQAAAAIGVQ…YQELLQKLLV (203 aa)). 171 to 226 (IQTHGFPVFFKPNEAGSSKGITKVTCVEEIASALKEAFTYCSAVLLQKNIAGVEIG) is an ATP binding site. Mg(2+)-binding residues include D297, E310, and N312. 3 residues coordinate Mn(2+): D297, E310, and N312. Residue S321 is part of the active site.

This sequence belongs to the D-alanine--D-alanine ligase family. In terms of assembly, homodimer. It depends on Mg(2+) as a cofactor. Mn(2+) is required as a cofactor.

It is found in the cell membrane. The enzyme catalyses D-serine + D-alanine + ATP = D-alanyl-D-serine + ADP + phosphate + H(+). Its pathway is cell wall biogenesis; peptidoglycan biosynthesis. With respect to regulation, inhibited by D-cycloserine. Required for low-level resistance to the glycopeptide antibiotic vancomycin. D-alanine--D-alanine ligase of altered specificity, which catalyzes synthesis of D-Ala-D-Ser; produces a peptidoglycan which does not terminate in D-alanine but in D-serine, thus probably reducing affinity for vancomycin. Only insignificant catalytic synthesis of D-Ala-D-Ala in vitro. The protein is Vancomycin C-type resistance protein VanC2 of Enterococcus casseliflavus (Enterococcus flavescens).